The following is a 320-amino-acid chain: Peptidase 1 (320 aa).

A signal peptide spans 1–18 (MKIVLAIASLLALSAVYA). A propeptide spans 19–98 (RPSSIKTFEE…LKTQFDLNAE (80 aa)) (activation peptide). Intrachain disulfides connect Cys102/Cys215, Cys129/Cys169, and Cys163/Cys201. The active site involves Cys132. A glycan (N-linked (GlcNAc...) asparagine) is linked at Asn150. Active-site residues include His268 and Asn288.

The protein belongs to the peptidase C1 family. Post-translationally, N-glycosylated. N-glycanase treatment does not completely remove carbohydrates, suggesting that the protein contains additional glycosylation sites.

It localises to the secreted. The catalysed reaction is Broad endopeptidase specificity.. Its function is as follows. Thiol protease, with a preference for substrates with a large hydrophobic side chain in the P2 position, or with basic residues. In Dermatophagoides pteronyssinus (European house dust mite), this protein is Peptidase 1 (DERP1).